We begin with the raw amino-acid sequence, 218 residues long: Ohanin-like protein (218 aa).

A signal peptide spans Met1–Gln40. Positions Glu41–Ala48 are excised as a propeptide. Residues Ser49 to Leu155 form the B30.2/SPRY domain. A propeptide spanning residues Arg156–Leu218 is cleaved from the precursor.

Belongs to the ohanin/vespryn family. Expressed by the venom gland.

It is found in the secreted. Functionally, neurotoxin that produces dose-dependent hypolocomotion and hyperalgesia in mice. May directly act on the central nervous system, as it is 6500-fold more potent when administered intracerebroventricularly than intraperitoneal. In Lachesis muta muta (Bushmaster), this protein is Ohanin-like protein.